Here is a 176-residue protein sequence, read N- to C-terminus: Ribosome maturation factor RimM (176 aa).

The 74-residue stretch at 93–166 folds into the PRC barrel domain; sequence EGEYYHADLI…RVVIELPAEI (74 aa).

Belongs to the RimM family. Binds ribosomal protein uS19.

The protein resides in the cytoplasm. An accessory protein needed during the final step in the assembly of 30S ribosomal subunit, possibly for assembly of the head region. Essential for efficient processing of 16S rRNA. May be needed both before and after RbfA during the maturation of 16S rRNA. It has affinity for free ribosomal 30S subunits but not for 70S ribosomes. The polypeptide is Ribosome maturation factor RimM (Rhodopseudomonas palustris (strain BisB18)).